A 205-amino-acid polypeptide reads, in one-letter code: Ypt/Rab-type GTPase Rab7 (205 aa).

Residues 17 to 23 (SGVGKTS), 33 to 40 (FSASYKAT), glycine 66, 125 to 128 (NKID), and 157 to 159 (SAK) each bind GTP. The Effector region motif lies at 37–45 (YKATIGADF). S-geranylgeranyl cysteine attachment occurs at residues cysteine 203 and cysteine 205. The residue at position 205 (cysteine 205) is a Cysteine methyl ester.

It belongs to the small GTPase superfamily. Rab family.

Its subcellular location is the cell membrane. Its activity is regulated as follows. Alternates between an inactive form bound to GDP and an active form bound to GTP. Activated by guanine nucleotide-exchange factors (GEFs), and inactivated by GTPase-activating proteins (GAPs). Ypt/Rab-type GTPases are key regulators of membrane trafficking and intracellular vesicular transport. They act as molecular switches that convert between GTP-bound and GDP-bound states, and regulate virtually all steps of membrane traffic from the formation of the transport vesicle at the donor membrane to its fusion at the target membrane. In the GDP-bound state, Ypt proteins are predominantly cytosolic, solubilized through the interaction with a GDP dissociation inhibitor (GDI). In the GTP-bound state, the proteins are membrane bound and interact with specific effector proteins that select cargo, promote vesicle movement, or verify the correct site of fusion. This chain is Ypt/Rab-type GTPase Rab7 (gtp-14), found in Neurospora crassa (strain ATCC 24698 / 74-OR23-1A / CBS 708.71 / DSM 1257 / FGSC 987).